Consider the following 85-residue polypeptide: Translation initiation factor IF-1 (85 aa).

The 72-residue stretch at 1–72 (MAKEELLEMR…TKARITYRFM (72 aa)) folds into the S1-like domain.

This sequence belongs to the IF-1 family. Component of the 30S ribosomal translation pre-initiation complex which assembles on the 30S ribosome in the order IF-2 and IF-3, IF-1 and N-formylmethionyl-tRNA(fMet); mRNA recruitment can occur at any time during PIC assembly.

Its subcellular location is the cytoplasm. In terms of biological role, one of the essential components for the initiation of protein synthesis. Stabilizes the binding of IF-2 and IF-3 on the 30S subunit to which N-formylmethionyl-tRNA(fMet) subsequently binds. Helps modulate mRNA selection, yielding the 30S pre-initiation complex (PIC). Upon addition of the 50S ribosomal subunit IF-1, IF-2 and IF-3 are released leaving the mature 70S translation initiation complex. In Erythrobacter litoralis (strain HTCC2594), this protein is Translation initiation factor IF-1.